Reading from the N-terminus, the 125-residue chain is Kappa-casein (125 aa).

Residues 42-63 form a disordered region; the sequence is LPNIDPPTVERRPRPRPSFIAI. Thr97 is a glycosylation site (O-linked (GalNAc...) threonine). Position 104 is a phosphoserine; alternate (Ser104). O-linked (GalNAc...) serine; alternate glycosylation is present at Ser104. O-linked (GalNAc...) threonine glycosylation occurs at Thr121. Ser122 is subject to Phosphoserine.

The protein belongs to the kappa-casein family. As to expression, mammary gland specific. Secreted in milk.

The protein resides in the secreted. Kappa-casein stabilizes micelle formation, preventing casein precipitation in milk. The protein is Kappa-casein (CSN3) of Lama guanicoe (Guanaco).